The following is a 348-amino-acid chain: Dihydroorotase (348 aa).

Zn(2+) contacts are provided by histidine 17 and histidine 19. Substrate-binding positions include histidine 19–arginine 21 and asparagine 45. Zn(2+) contacts are provided by lysine 103, histidine 140, and histidine 178. Lysine 103 is subject to N6-carboxylysine. A substrate-binding site is contributed by histidine 140. Leucine 223 contributes to the substrate binding site. Aspartate 251 is a binding site for Zn(2+). The active site involves aspartate 251. Residues histidine 255 and alanine 267 each coordinate substrate.

This sequence belongs to the metallo-dependent hydrolases superfamily. DHOase family. Class II DHOase subfamily. As to quaternary structure, homodimer. Zn(2+) is required as a cofactor.

The catalysed reaction is (S)-dihydroorotate + H2O = N-carbamoyl-L-aspartate + H(+). It participates in pyrimidine metabolism; UMP biosynthesis via de novo pathway; (S)-dihydroorotate from bicarbonate: step 3/3. Functionally, catalyzes the reversible cyclization of carbamoyl aspartate to dihydroorotate. This is Dihydroorotase from Escherichia coli (strain SMS-3-5 / SECEC).